The primary structure comprises 93 residues: Bublin coiled-coil protein (93 aa).

Disordered regions lie at residues 1–26 (MAGPNGDPHVLGGGTGDEGDEGGDTF) and 74–93 (QQQSKQLNTGADVQGSQPPA). The segment covering 17–26 (DEGDEGGDTF) has biased composition (acidic residues). Residues 59-80 (LKELLESNRQTRLEFQQQSKQL) are a coiled coil.

Belongs to the UPF0184 (EST00098) family.

It is found in the cell junction. Its subcellular location is the cytoplasm. The protein resides in the cytoskeleton. Its function is as follows. Essential for intermediate filament organization in intestinal cells, interacts with intermediate filament and regulates intestinal lumen morphology. This is Bublin coiled-coil protein (BBLN) from Taeniopygia guttata (Zebra finch).